Here is a 168-residue protein sequence, read N- to C-terminus: Photosystem I assembly protein Ycf3 (168 aa).

TPR repeat units lie at residues 35–68 (AFTYYRDGMSAQSEGNYAEALQNYYEAMRLEIDP), 72–105 (SYILYNIGLIHTSNGEHTKALEYYFRALERNPFL), and 120–153 (GEQAIRQGDSEIAEAWFDQAAEYWKQAIALTPGN).

It belongs to the Ycf3 family.

Its subcellular location is the plastid. It is found in the chloroplast thylakoid membrane. Essential for the assembly of the photosystem I (PSI) complex. May act as a chaperone-like factor to guide the assembly of the PSI subunits. The sequence is that of Photosystem I assembly protein Ycf3 from Helianthus annuus (Common sunflower).